Reading from the N-terminus, the 402-residue chain is S-adenosylmethionine synthase (402 aa).

137–142 contributes to the ATP binding site; it reads GQGSAD.

Belongs to the AdoMet synthase 2 family. Mg(2+) serves as cofactor.

The enzyme catalyses L-methionine + ATP + H2O = S-adenosyl-L-methionine + phosphate + diphosphate. It functions in the pathway amino-acid biosynthesis; S-adenosyl-L-methionine biosynthesis; S-adenosyl-L-methionine from L-methionine: step 1/1. In terms of biological role, catalyzes the formation of S-adenosylmethionine from methionine and ATP. This chain is S-adenosylmethionine synthase, found in Pyrobaculum islandicum (strain DSM 4184 / JCM 9189 / GEO3).